The following is a 356-amino-acid chain: Probable arabinogalactan endo-beta-1,4-galactanase A (356 aa).

The first 21 residues, 1–21 (MLGKTVLLPLLVLLCHSLASA), serve as a signal peptide directing secretion. A glycan (N-linked (GlcNAc...) asparagine) is linked at N133. E157 serves as the catalytic Proton donor. Catalysis depends on E268, which acts as the Nucleophile.

Belongs to the glycosyl hydrolase 53 family.

The protein resides in the secreted. The enzyme catalyses The enzyme specifically hydrolyzes (1-&gt;4)-beta-D-galactosidic linkages in type I arabinogalactans.. In terms of biological role, endogalactanase involved in the degradation of plant cell wall polysaccharides, and more particularly of hairy regions of pectin. This chain is Probable arabinogalactan endo-beta-1,4-galactanase A (galA), found in Aspergillus fumigatus (strain CBS 144.89 / FGSC A1163 / CEA10) (Neosartorya fumigata).